A 274-amino-acid polypeptide reads, in one-letter code: Secreted RxLR effector protein 144 (274 aa).

An N-terminal signal peptide occupies residues 1 to 20 (MRPWLLLLVGLSSFFALSTS). The RxLR-dEER motif lies at 49 to 72 (RKLRAFGGDTNTLKDSGKARREEK).

Belongs to the RxLR effector family.

Its subcellular location is the secreted. It is found in the host nucleus. It localises to the host cytoplasm. Its function is as follows. Secreted effector that completely suppresses the host cell death induced by cell death-inducing proteins. This chain is Secreted RxLR effector protein 144, found in Plasmopara viticola (Downy mildew of grapevine).